The following is a 739-amino-acid chain: NAD(P)H-quinone oxidoreductase subunit 5, chloroplastic (739 aa).

16 helical membrane passes run 9–29 (WIIP…LLLV), 39–59 (IWAF…ADLA), 89–109 (IDPL…MVLI), 125–145 (FAYM…SNLI), 147–167 (IYIF…FWFT), 185–205 (GDFG…SFEF), 224–244 (LFAA…SAQF), 258–278 (TPIS…FLVA), 280–300 (LLPL…IGII), 327–347 (LGYI…FHLI), 354–374 (ALLF…VGYS), 396–416 (TTFF…CFWS), 425–445 (WLYS…TAFY), 544–564 (LFPM…GIPF), 603–623 (IYSV…YGSV), and 716–736 (ISSY…IYYF).

This sequence belongs to the complex I subunit 5 family. As to quaternary structure, NDH is composed of at least 16 different subunits, 5 of which are encoded in the nucleus.

It is found in the plastid. The protein localises to the chloroplast thylakoid membrane. It carries out the reaction a plastoquinone + NADH + (n+1) H(+)(in) = a plastoquinol + NAD(+) + n H(+)(out). The catalysed reaction is a plastoquinone + NADPH + (n+1) H(+)(in) = a plastoquinol + NADP(+) + n H(+)(out). NDH shuttles electrons from NAD(P)H:plastoquinone, via FMN and iron-sulfur (Fe-S) centers, to quinones in the photosynthetic chain and possibly in a chloroplast respiratory chain. The immediate electron acceptor for the enzyme in this species is believed to be plastoquinone. Couples the redox reaction to proton translocation, and thus conserves the redox energy in a proton gradient. In Acorus calamus (Sweet flag), this protein is NAD(P)H-quinone oxidoreductase subunit 5, chloroplastic (ndhF).